The following is a 545-amino-acid chain: CTP synthase (545 aa).

Positions 1–265 are amidoligase domain; it reads MNGIKHIFIT…DKFVIKHLDL (265 aa). Serine 15 contributes to the CTP binding site. Serine 15 lines the UTP pocket. ATP is bound by residues 16-21 and aspartate 73; that span reads SIGKGL. The Mg(2+) site is built by aspartate 73 and glutamate 141. Residues 148–150, 188–193, and lysine 224 contribute to the CTP site; these read DIE and KTKPTQ. UTP contacts are provided by residues 188-193 and lysine 224; that span reads KTKPTQ. Residues 290–534 form the Glutamine amidotransferase type-1 domain; that stretch reads EIAIIGKYTG…VAAALARKEI (245 aa). Glycine 349 is an L-glutamine binding site. Cysteine 376 acts as the Nucleophile; for glutamine hydrolysis in catalysis. L-glutamine-binding positions include 377-380, glutamate 400, and arginine 460; that span reads LGMQ. Catalysis depends on residues histidine 507 and glutamate 509.

The protein belongs to the CTP synthase family. In terms of assembly, homotetramer.

It catalyses the reaction UTP + L-glutamine + ATP + H2O = CTP + L-glutamate + ADP + phosphate + 2 H(+). The catalysed reaction is L-glutamine + H2O = L-glutamate + NH4(+). The enzyme catalyses UTP + NH4(+) + ATP = CTP + ADP + phosphate + 2 H(+). The protein operates within pyrimidine metabolism; CTP biosynthesis via de novo pathway; CTP from UDP: step 2/2. Its activity is regulated as follows. Allosterically activated by GTP, when glutamine is the substrate; GTP has no effect on the reaction when ammonia is the substrate. The allosteric effector GTP functions by stabilizing the protein conformation that binds the tetrahedral intermediate(s) formed during glutamine hydrolysis. Inhibited by the product CTP, via allosteric rather than competitive inhibition. Its function is as follows. Catalyzes the ATP-dependent amination of UTP to CTP with either L-glutamine or ammonia as the source of nitrogen. Regulates intracellular CTP levels through interactions with the four ribonucleotide triphosphates. The chain is CTP synthase from Tropheryma whipplei (strain Twist) (Whipple's bacillus).